The primary structure comprises 735 residues: Type-3 glutamine synthetase (735 aa).

A GS beta-grasp domain is found at 89–183 (THYCHWFLPL…IPTAFCSWTG (95 aa)). Positions 188–621 (QKTPLLRSME…SLYDLVSTLV (434 aa)) constitute a GS catalytic domain.

This sequence belongs to the glutamine synthetase family. Type 3 subfamily. In terms of assembly, homohexamer.

It carries out the reaction L-glutamate + NH4(+) + ATP = L-glutamine + ADP + phosphate + H(+). This is Type-3 glutamine synthetase (glnA3) from Dictyostelium discoideum (Social amoeba).